Here is a 193-residue protein sequence, read N- to C-terminus: Major intrinsically disordered NOTCH2-binding receptor 1-like homolog (193 aa).

The residue at position 82 (Ser82) is a Phosphoserine. Asn128 carries an N-linked (GlcNAc...) asparagine glycan. The helical transmembrane segment at 172-192 (GLILLLVASILVTIVTLSTIF) threads the bilayer.

This sequence belongs to the MINAR family. As to quaternary structure, interacts with NOTCH2. As to expression, widely expressed in the cortex and Purkinje cells of cerebellum. Expressed in the inner ear, mainly in the hair cells, spiral ganglia, the spiral limbus, and the stria vascularis.

Its subcellular location is the lysosome membrane. The protein resides in the endoplasmic reticulum membrane. Binds cholesterol and may regulate the distribution and homeostasis of cholesterol in hair cells. May play a role in angiogenesis. This is Major intrinsically disordered NOTCH2-binding receptor 1-like homolog from Mus musculus (Mouse).